The primary structure comprises 323 residues: Acetyl-coenzyme A carboxylase carboxyl transferase subunit alpha 1 (323 aa).

One can recognise a CoA carboxyltransferase C-terminal domain in the interval 39 to 293 (RLSKKSQQLT…RRALGDSLRQ (255 aa)).

The protein belongs to the AccA family. Acetyl-CoA carboxylase is a heterohexamer composed of biotin carboxyl carrier protein (AccB), biotin carboxylase (AccC) and two subunits each of ACCase subunit alpha (AccA) and ACCase subunit beta (AccD).

It localises to the cytoplasm. The catalysed reaction is N(6)-carboxybiotinyl-L-lysyl-[protein] + acetyl-CoA = N(6)-biotinyl-L-lysyl-[protein] + malonyl-CoA. It participates in lipid metabolism; malonyl-CoA biosynthesis; malonyl-CoA from acetyl-CoA: step 1/1. Component of the acetyl coenzyme A carboxylase (ACC) complex. First, biotin carboxylase catalyzes the carboxylation of biotin on its carrier protein (BCCP) and then the CO(2) group is transferred by the carboxyltransferase to acetyl-CoA to form malonyl-CoA. Functionally, does not confer resistance to the endogenous polyketide antibiotic thailandamide, does not confer resistance to thailandamide when expressed in S.typhimurium. This is Acetyl-coenzyme A carboxylase carboxyl transferase subunit alpha 1 from Burkholderia thailandensis (strain ATCC 700388 / DSM 13276 / CCUG 48851 / CIP 106301 / E264).